Reading from the N-terminus, the 557-residue chain is CTP synthase (557 aa).

Positions 1 to 267 (MAKFVFVTGG…CREVLDVLDL (267 aa)) are amidoligase domain. Ser-13 contributes to the CTP binding site. Ser-13 provides a ligand contact to UTP. ATP is bound by residues 14–19 (SIGKGI) and Asp-71. Mg(2+) is bound by residues Asp-71 and Glu-141. CTP-binding positions include 148 to 150 (DIE), 188 to 193 (KTKPTQ), and Lys-224. UTP-binding positions include 188 to 193 (KTKPTQ) and Lys-224. One can recognise a Glutamine amidotransferase type-1 domain in the interval 292–534 (KVALVGKYVQ…IEAAQQRLPC (243 aa)). An L-glutamine-binding site is contributed by Gly-354. Cys-381 acts as the Nucleophile; for glutamine hydrolysis in catalysis. L-glutamine-binding positions include 382–385 (LGMQ), Glu-405, and Arg-462. Active-site residues include His-507 and Glu-509. A disordered region spans residues 532–557 (LPCSPSEAMRQQNNSAAGSSHPSLQP). Residues 540–557 (MRQQNNSAAGSSHPSLQP) show a composition bias toward polar residues.

It belongs to the CTP synthase family. In terms of assembly, homotetramer.

The enzyme catalyses UTP + L-glutamine + ATP + H2O = CTP + L-glutamate + ADP + phosphate + 2 H(+). It catalyses the reaction L-glutamine + H2O = L-glutamate + NH4(+). The catalysed reaction is UTP + NH4(+) + ATP = CTP + ADP + phosphate + 2 H(+). It functions in the pathway pyrimidine metabolism; CTP biosynthesis via de novo pathway; CTP from UDP: step 2/2. Allosterically activated by GTP, when glutamine is the substrate; GTP has no effect on the reaction when ammonia is the substrate. The allosteric effector GTP functions by stabilizing the protein conformation that binds the tetrahedral intermediate(s) formed during glutamine hydrolysis. Inhibited by the product CTP, via allosteric rather than competitive inhibition. Catalyzes the ATP-dependent amination of UTP to CTP with either L-glutamine or ammonia as the source of nitrogen. Regulates intracellular CTP levels through interactions with the four ribonucleotide triphosphates. The protein is CTP synthase of Synechococcus sp. (strain CC9311).